A 514-amino-acid chain; its full sequence is tRNA-2-methylthio-N(6)-dimethylallyladenosine synthase (514 aa).

Residues 68–186 (RTFLIKTYGC…LPEILEEAYL (119 aa)) enclose the MTTase N-terminal domain. [4Fe-4S] cluster is bound by residues cysteine 77, cysteine 113, cysteine 147, cysteine 223, cysteine 227, and cysteine 230. The region spanning 209–439 (RDGHIKAWVN…NKKVGIYSQQ (231 aa)) is the Radical SAM core domain. In terms of domain architecture, TRAM spans 442–505 (SQYEGKIVTV…QYSLNGTFIQ (64 aa)).

This sequence belongs to the methylthiotransferase family. MiaB subfamily. Monomer. It depends on [4Fe-4S] cluster as a cofactor.

It is found in the cytoplasm. It carries out the reaction N(6)-dimethylallyladenosine(37) in tRNA + (sulfur carrier)-SH + AH2 + 2 S-adenosyl-L-methionine = 2-methylsulfanyl-N(6)-dimethylallyladenosine(37) in tRNA + (sulfur carrier)-H + 5'-deoxyadenosine + L-methionine + A + S-adenosyl-L-homocysteine + 2 H(+). Functionally, catalyzes the methylthiolation of N6-(dimethylallyl)adenosine (i(6)A), leading to the formation of 2-methylthio-N6-(dimethylallyl)adenosine (ms(2)i(6)A) at position 37 in tRNAs that read codons beginning with uridine. This Staphylococcus epidermidis (strain ATCC 35984 / DSM 28319 / BCRC 17069 / CCUG 31568 / BM 3577 / RP62A) protein is tRNA-2-methylthio-N(6)-dimethylallyladenosine synthase.